The primary structure comprises 228 residues: Heat shock 70-related protein 4 (228 aa).

The segment at 57–80 (RWHEPPGNTVFDEAHDRPQVRRPD) is disordered. A compositionally biased stretch (basic and acidic residues) spans 68–80 (DEAHDRPQVRRPD).

This sequence belongs to the heat shock protein 70 family.

In Leishmania major, this protein is Heat shock 70-related protein 4 (HSP70.4).